The primary structure comprises 440 residues: Chromosomal replication initiator protein DnaA (440 aa).

Residues 1–93 (MNVQLNEIWN…QTPVKPVAQE (93 aa)) form a domain I, interacts with DnaA modulators region. The segment at 94 to 101 (YTEDSNMS) is domain II. Residues 102–318 (FLNPKYTFDT…GALNRVIAYS (217 aa)) form a domain III, AAA+ region region. Residues Gly-146, Gly-148, Lys-149, and Thr-150 each coordinate ATP. The tract at residues 319 to 440 (TLTENIINVD…EEIKKNITGG (122 aa)) is domain IV, binds dsDNA.

This sequence belongs to the DnaA family. Oligomerizes as a right-handed, spiral filament on DNA at oriC.

The protein localises to the cytoplasm. In terms of biological role, plays an essential role in the initiation and regulation of chromosomal replication. ATP-DnaA binds to the origin of replication (oriC) to initiate formation of the DNA replication initiation complex once per cell cycle. Binds the DnaA box (a 9 base pair repeat at the origin) and separates the double-stranded (ds)DNA. Forms a right-handed helical filament on oriC DNA; dsDNA binds to the exterior of the filament while single-stranded (ss)DNA is stabiized in the filament's interior. The ATP-DnaA-oriC complex binds and stabilizes one strand of the AT-rich DNA unwinding element (DUE), permitting loading of DNA polymerase. After initiation quickly degrades to an ADP-DnaA complex that is not apt for DNA replication. Binds acidic phospholipids. The sequence is that of Chromosomal replication initiator protein DnaA from Ruminiclostridium cellulolyticum (strain ATCC 35319 / DSM 5812 / JCM 6584 / H10) (Clostridium cellulolyticum).